We begin with the raw amino-acid sequence, 166 residues long: PR-toxin biosynthesis cluster protein 10 (166 aa).

Functionally, part of the gene cluster that mediates the biosynthesis of PR-toxin, a bicyclic sesquiterpene belonging to the eremophilane class and acting as a mycotoxin. The first step of the pathway is catalyzed by the aristolochene synthase which performs the cyclization of trans,trans-farnesyl diphosphate (FPP) to the bicyclic sesquiterpene aristolochene. Following the formation of aristolochene, the non-oxygenated aristolochene is converted to the trioxygenated intermediate eremofortin B, via 7-epi-neopetasone. This conversion appears to involve three enzymes, a hydroxysterol oxidase-like enzyme, the quinone-oxidase prx3 that forms the quinone-type-structure in the bicyclic nucleus of aristolochene with the C8-oxo group and the C-3 hydroxyl group, and the P450 monooxygenase prx9 that introduces the epoxide at the double bond between carbons 1 and 2. No monoxy or dioxy-intermediates have been reported to be released to the broth, so these three early oxidative reactions may be coupled together. Eremofortin B is further oxidized by another P450 monooxygenase, that introduces a second epoxide between carbons 7 and 11 prior to acetylation to eremofortin A by the acetyltransferase prx11. The second epoxidation may be performed by a second P450 monooxygenase. After the acetylation step, eremofortin A is converted to eremofortin C and then to PR-toxin. First the conversion of eremofortin A to eremofortin C proceeds by oxidation of the side chain of the molecule at C-12 and is catalyzed by the short-chain oxidoreductase prx1. The cytochrome P450 monooxygenase prx8 also plays a role in this step. The primary alcohol formed at C-12 is finally oxidized by the short-chain alcohol dehydrogenase prx4 that forms PR-toxin. The sequence is that of PR-toxin biosynthesis cluster protein 10 from Penicillium rubens (strain ATCC 28089 / DSM 1075 / NRRL 1951 / Wisconsin 54-1255) (Penicillium chrysogenum).